The following is a 132-amino-acid chain: Small ribosomal subunit protein uS11 (132 aa).

This sequence belongs to the universal ribosomal protein uS11 family. Part of the 30S ribosomal subunit.

Functionally, located on the platform of the 30S subunit. The protein is Small ribosomal subunit protein uS11 of Sulfolobus acidocaldarius (strain ATCC 33909 / DSM 639 / JCM 8929 / NBRC 15157 / NCIMB 11770).